The primary structure comprises 382 residues: Nuclear hormone receptor family member nhr-106 (382 aa).

Positions 2–78 (QTTCEICEVP…MGMMPEKVKV (77 aa)) form a DNA-binding region, nuclear receptor. 2 NR C4-type zinc fingers span residues 5–25 (CEIC…CRGC) and 42–61 (CKYS…CKSC). The NR LBD domain occupies 110–380 (DVSNLITRGL…FSNPEMFIDS (271 aa)).

It belongs to the nuclear hormone receptor family.

The protein localises to the nucleus. Orphan nuclear receptor. In Caenorhabditis elegans, this protein is Nuclear hormone receptor family member nhr-106 (nhr-106).